The primary structure comprises 67 residues: DNA-directed RNA polymerase subunit omega (67 aa).

It belongs to the RNA polymerase subunit omega family. The RNAP catalytic core consists of 2 alpha, 1 beta, 1 beta' and 1 omega subunit. When a sigma factor is associated with the core the holoenzyme is formed, which can initiate transcription.

It carries out the reaction RNA(n) + a ribonucleoside 5'-triphosphate = RNA(n+1) + diphosphate. Promotes RNA polymerase assembly. Latches the N- and C-terminal regions of the beta' subunit thereby facilitating its interaction with the beta and alpha subunits. This is DNA-directed RNA polymerase subunit omega from Listeria innocua serovar 6a (strain ATCC BAA-680 / CLIP 11262).